Consider the following 233-residue polypeptide: 2-C-methyl-D-erythritol 4-phosphate cytidylyltransferase (233 aa).

The protein belongs to the IspD/TarI cytidylyltransferase family. IspD subfamily.

The enzyme catalyses 2-C-methyl-D-erythritol 4-phosphate + CTP + H(+) = 4-CDP-2-C-methyl-D-erythritol + diphosphate. It participates in isoprenoid biosynthesis; isopentenyl diphosphate biosynthesis via DXP pathway; isopentenyl diphosphate from 1-deoxy-D-xylulose 5-phosphate: step 2/6. Its function is as follows. Catalyzes the formation of 4-diphosphocytidyl-2-C-methyl-D-erythritol from CTP and 2-C-methyl-D-erythritol 4-phosphate (MEP). This Thiobacillus denitrificans (strain ATCC 25259 / T1) protein is 2-C-methyl-D-erythritol 4-phosphate cytidylyltransferase.